Here is a 347-residue protein sequence, read N- to C-terminus: S-adenosylmethionine:tRNA ribosyltransferase-isomerase (347 aa).

It belongs to the QueA family. In terms of assembly, monomer.

It localises to the cytoplasm. The catalysed reaction is 7-aminomethyl-7-carbaguanosine(34) in tRNA + S-adenosyl-L-methionine = epoxyqueuosine(34) in tRNA + adenine + L-methionine + 2 H(+). It functions in the pathway tRNA modification; tRNA-queuosine biosynthesis. Functionally, transfers and isomerizes the ribose moiety from AdoMet to the 7-aminomethyl group of 7-deazaguanine (preQ1-tRNA) to give epoxyqueuosine (oQ-tRNA). This chain is S-adenosylmethionine:tRNA ribosyltransferase-isomerase, found in Pseudomonas aeruginosa (strain LESB58).